The sequence spans 207 residues: SPRY domain-containing protein 4 (207 aa).

The region spanning Tyr-12–Leu-207 is the B30.2/SPRY domain. N6-acetyllysine is present on residues Lys-53 and Lys-130. Lys-139 bears the N6-succinyllysine mark.

This chain is SPRY domain-containing protein 4 (Spryd4), found in Mus musculus (Mouse).